A 369-amino-acid polypeptide reads, in one-letter code: 4beta-methylsterol monooxygenase (369 aa).

In terms of domain architecture, Rieske spans 29 to 135; it reads WYVVEIDGRL…VKAQWGLIWL (107 aa). Cys70, His72, Cys89, and His92 together coordinate [2Fe-2S] cluster.

The cofactor is [2Fe-2S] cluster.

The catalysed reaction is a 3beta-hydroxy-4,4-dimethylsteroid + 3 NADH + 3 O2 + 2 H(+) = a 3beta-hydroxy-4alpha-methylsteroid-4beta-carboxylate + 3 NAD(+) + 4 H2O. It catalyses the reaction 4,4-dimethyl-5alpha-cholesta-8,24-dien-3beta-ol + 3 NADH + 3 O2 + 2 H(+) = 4beta-carboxy-4alpha-methyl-5alpha-cholesta-8,24-dien-3beta-ol + 3 NAD(+) + 4 H2O. It carries out the reaction a 3beta-hydroxy-4,4-dimethylsteroid + NADH + O2 + H(+) = a 3beta-hydroxy-4beta-hydroxymethyl-4alpha-methylsteroid + NAD(+) + H2O. The enzyme catalyses a 3beta-hydroxy-4beta-hydroxymethyl-4alpha-methylsteroid + NADH + O2 + H(+) = a 3beta-hydroxy-4beta-formyl-4alpha-methylsteroid + NAD(+) + 2 H2O. The catalysed reaction is a 3beta-hydroxy-4beta-formyl-4alpha-methylsteroid + NADH + O2 = a 3beta-hydroxy-4alpha-methylsteroid-4beta-carboxylate + NAD(+) + H2O. It catalyses the reaction 4,4-dimethyl-5alpha-cholesta-8,24-dien-3beta-ol + NADH + O2 + H(+) = 4beta-hydroxymethyl-4alpha-methylzymosterol + NAD(+) + H2O. It carries out the reaction 4beta-hydroxymethyl-4alpha-methylzymosterol + NADH + O2 + H(+) = 4beta-formylmethyl-4alpha-methyl-5alpha-cholesta-8,24-dien-3beta-ol + NAD(+) + 2 H2O. The enzyme catalyses 4beta-formylmethyl-4alpha-methyl-5alpha-cholesta-8,24-dien-3beta-ol + NADH + O2 = 4beta-carboxy-4alpha-methyl-5alpha-cholesta-8,24-dien-3beta-ol + NAD(+) + H2O. It functions in the pathway steroid biosynthesis; sterol biosynthesis. Its function is as follows. Participates in the biosynthesis of bacterial sterols. Together with SdmB, removes one methyl group from the C-4 position of 4,4-dimethylated steroid molecules. SdmA oxidizes the sterol 4beta-methyl group into first a hydroxyl, then an aldehyde and finally a carboxylic acid group. In Methylococcus capsulatus (strain ATCC 33009 / NCIMB 11132 / Bath), this protein is 4beta-methylsterol monooxygenase.